Reading from the N-terminus, the 739-residue chain is Phosphoribosylformylglycinamidine synthase subunit PurL (739 aa).

His53 is a catalytic residue. 2 residues coordinate ATP: Tyr56 and Lys95. Residue Glu97 participates in Mg(2+) binding. Substrate is bound by residues 98–101 (SHNH) and Arg120. Residue His99 is the Proton acceptor of the active site. Mg(2+) is bound at residue Asp121. Gln244 provides a ligand contact to substrate. Asp274 contacts Mg(2+). 318–320 (ESQ) is a binding site for substrate. ATP-binding residues include Asp501 and Gly538. Asn539 contacts Mg(2+). A substrate-binding site is contributed by Ser541.

It belongs to the FGAMS family. Monomer. Part of the FGAM synthase complex composed of 1 PurL, 1 PurQ and 2 PurS subunits.

Its subcellular location is the cytoplasm. It catalyses the reaction N(2)-formyl-N(1)-(5-phospho-beta-D-ribosyl)glycinamide + L-glutamine + ATP + H2O = 2-formamido-N(1)-(5-O-phospho-beta-D-ribosyl)acetamidine + L-glutamate + ADP + phosphate + H(+). It functions in the pathway purine metabolism; IMP biosynthesis via de novo pathway; 5-amino-1-(5-phospho-D-ribosyl)imidazole from N(2)-formyl-N(1)-(5-phospho-D-ribosyl)glycinamide: step 1/2. In terms of biological role, part of the phosphoribosylformylglycinamidine synthase complex involved in the purines biosynthetic pathway. Catalyzes the ATP-dependent conversion of formylglycinamide ribonucleotide (FGAR) and glutamine to yield formylglycinamidine ribonucleotide (FGAM) and glutamate. The FGAM synthase complex is composed of three subunits. PurQ produces an ammonia molecule by converting glutamine to glutamate. PurL transfers the ammonia molecule to FGAR to form FGAM in an ATP-dependent manner. PurS interacts with PurQ and PurL and is thought to assist in the transfer of the ammonia molecule from PurQ to PurL. The protein is Phosphoribosylformylglycinamidine synthase subunit PurL of Listeria welshimeri serovar 6b (strain ATCC 35897 / DSM 20650 / CCUG 15529 / CIP 8149 / NCTC 11857 / SLCC 5334 / V8).